The chain runs to 163 residues: 2-C-methyl-D-erythritol 2,4-cyclodiphosphate synthase (163 aa).

A divalent metal cation contacts are provided by D12 and H14. 4-CDP-2-C-methyl-D-erythritol 2-phosphate-binding positions include 12 to 14 (DVH) and 38 to 39 (HS). H46 serves as a coordination point for a divalent metal cation. 4-CDP-2-C-methyl-D-erythritol 2-phosphate-binding positions include 60-62 (DIG), 136-139 (TTSE), F143, and R146.

The protein belongs to the IspF family. Homotrimer. The cofactor is a divalent metal cation.

It carries out the reaction 4-CDP-2-C-methyl-D-erythritol 2-phosphate = 2-C-methyl-D-erythritol 2,4-cyclic diphosphate + CMP. It participates in isoprenoid biosynthesis; isopentenyl diphosphate biosynthesis via DXP pathway; isopentenyl diphosphate from 1-deoxy-D-xylulose 5-phosphate: step 4/6. Its function is as follows. Involved in the biosynthesis of isopentenyl diphosphate (IPP) and dimethylallyl diphosphate (DMAPP), two major building blocks of isoprenoid compounds. Catalyzes the conversion of 4-diphosphocytidyl-2-C-methyl-D-erythritol 2-phosphate (CDP-ME2P) to 2-C-methyl-D-erythritol 2,4-cyclodiphosphate (ME-CPP) with a corresponding release of cytidine 5-monophosphate (CMP). The polypeptide is 2-C-methyl-D-erythritol 2,4-cyclodiphosphate synthase (Xanthomonas campestris pv. campestris (strain 8004)).